We begin with the raw amino-acid sequence, 367 residues long: MTVYLLAGGGTAGHVNPLLAVADELRAREPGSTILVLGTREGLESRLVPARGYELLTIARLPFPRRPNGAAVRFAPAFTRAVGQIRRMIAERGVDVVVGFGGYAAAPAYLAARRSGVPVVVHEANASPGLANRLGARVATAVGITFPGTALGPRAEVVGMPLRREIATLDRDAVRDAARAELGLDADRPTLLVTGGSTGARSLNRTVVQVAERITATGAQILHIVGGAQEFTDPGVERYHVVGYSDRMELAIAAADLVVSRAGAGALSELTAVGIPAVYVPYPVGNGEQAVNVRGVVAAGGGIVVADADFTPDWVLAHVVPLLSDPAALARMSEAAASVGTRDGAARMADLVRDAVASRPSRPAVRR.

UDP-N-acetyl-alpha-D-glucosamine-binding positions include 11–13 (TAG), Asn125, Arg163, Ser197, and Gln289.

Belongs to the glycosyltransferase 28 family. MurG subfamily.

The protein localises to the cell membrane. The enzyme catalyses di-trans,octa-cis-undecaprenyl diphospho-N-acetyl-alpha-D-muramoyl-L-alanyl-D-glutamyl-meso-2,6-diaminopimeloyl-D-alanyl-D-alanine + UDP-N-acetyl-alpha-D-glucosamine = di-trans,octa-cis-undecaprenyl diphospho-[N-acetyl-alpha-D-glucosaminyl-(1-&gt;4)]-N-acetyl-alpha-D-muramoyl-L-alanyl-D-glutamyl-meso-2,6-diaminopimeloyl-D-alanyl-D-alanine + UDP + H(+). It functions in the pathway cell wall biogenesis; peptidoglycan biosynthesis. Functionally, cell wall formation. Catalyzes the transfer of a GlcNAc subunit on undecaprenyl-pyrophosphoryl-MurNAc-pentapeptide (lipid intermediate I) to form undecaprenyl-pyrophosphoryl-MurNAc-(pentapeptide)GlcNAc (lipid intermediate II). This Clavibacter sepedonicus (Clavibacter michiganensis subsp. sepedonicus) protein is UDP-N-acetylglucosamine--N-acetylmuramyl-(pentapeptide) pyrophosphoryl-undecaprenol N-acetylglucosamine transferase.